A 123-amino-acid polypeptide reads, in one-letter code: Thioredoxin domain-containing protein 17 (123 aa).

The residue at position 2 (alanine 2) is an N-acetylalanine. Residues 41 to 123 (SWCPDCVQAE…NLVEMLFSED (83 aa)) enclose the Thioredoxin domain. Catalysis depends on nucleophile residues cysteine 43 and cysteine 46. Cysteine 43 and cysteine 46 are disulfide-bonded.

Belongs to the thioredoxin family. In terms of assembly, interacts with TRXR1 and DYNLL1/DNCL1. The oxidized protein is reduced by TRXR1. In terms of tissue distribution, ubiquitously expressed in cell lines.

It is found in the cytoplasm. In terms of biological role, disulfide reductase. May participate in various redox reactions through the reversible oxidation of its active center dithiol to a disulfide and catalyze dithiol-disulfide exchange reactions. Modulates TNF-alpha signaling and NF-kappa-B activation. Has peroxidase activity and may contribute to the elimination of cellular hydrogen peroxide. This is Thioredoxin domain-containing protein 17 (TXNDC17) from Homo sapiens (Human).